Reading from the N-terminus, the 656-residue chain is Kinesin-related protein SMY1 (656 aa).

The 338-residue stretch at 27–364 (HIEVILRAIP…LEFGDSIRQI (338 aa)) folds into the Kinesin motor domain. Residue 114-121 (GPSFSGKS) coordinates ATP. At Thr583 the chain carries Phosphothreonine.

Belongs to the TRAFAC class myosin-kinesin ATPase superfamily. Kinesin family.

Its subcellular location is the cytoplasm. It is found in the cytoskeleton. Possible microtubule-based motor that can interact or substitute with myosin 2 (MYO2). The protein is Kinesin-related protein SMY1 (SMY1) of Saccharomyces cerevisiae (strain ATCC 204508 / S288c) (Baker's yeast).